Consider the following 572-residue polypeptide: Urease subunit alpha (572 aa).

In terms of domain architecture, Urease spans 136–572 (GGIDTHIHWI…VPLAQRYFLF (437 aa)). 3 residues coordinate Ni(2+): His-141, His-143, and Lys-224. Lys-224 carries the post-translational modification N6-carboxylysine. His-226 serves as a coordination point for substrate. Residues His-253 and His-279 each contribute to the Ni(2+) site. His-327 (proton donor) is an active-site residue. Position 367 (Asp-367) interacts with Ni(2+).

Belongs to the metallo-dependent hydrolases superfamily. Urease alpha subunit family. In terms of assembly, heterotrimer of UreA (gamma), UreB (beta) and UreC (alpha) subunits. Three heterotrimers associate to form the active enzyme. The cofactor is Ni cation. Post-translationally, carboxylation allows a single lysine to coordinate two nickel ions.

The protein localises to the cytoplasm. The catalysed reaction is urea + 2 H2O + H(+) = hydrogencarbonate + 2 NH4(+). It functions in the pathway nitrogen metabolism; urea degradation; CO(2) and NH(3) from urea (urease route): step 1/1. This Actinobacillus pleuropneumoniae serotype 5b (strain L20) protein is Urease subunit alpha.